Reading from the N-terminus, the 405-residue chain is Peroxisomal membrane protein PEX13 (405 aa).

A compositionally biased stretch (pro residues) spans 1 to 11 (MASQPPPPPKP). The disordered stretch occupies residues 1–71 (MASQPPPPPK…SQQTGSNNVN (71 aa)). Over 1 to 136 (MASQPPPPPK…SSRGAFQSIE (136 aa)) the chain is Peroxisomal matrix. Residues 61–71 (PSQQTGSNNVN) are compositionally biased toward polar residues. The helical transmembrane segment at 137–157 (SIVHAFASVSMMMDATFSAVY) threads the bilayer. Positions 147–235 (MMMDATFSAV…EDQATNSAKS (89 aa)) are targeting to peroxisomes. At 158–176 (NSFRAVLDVANHFSRLKIH) the chain is on the cytoplasmic side. Residues 177–194 (FTKVFSAFALVRTIRYLY) traverse the membrane as a helical segment. The tract at residues 177 to 198 (FTKVFSAFALVRTIRYLYRRLQ) is interaction with PEX19. Over 195–235 (RRLQWMMGLRRGSENEDLWAESEGTVACLSAEDQATNSAKS) the chain is Peroxisomal matrix. A helical membrane pass occupies residues 236-256 (WPIFLFFAVILGGPYLIWKLL). At 257–405 (STHNDEVTDN…TGKNGDKQDL (149 aa)) the chain is on the cytoplasmic side. Residues 274-338 (DDHVVARAEY…PANYVKILGK (65 aa)) enclose the SH3 domain. Ser356 bears the Phosphoserine mark.

This sequence belongs to the peroxin-13 family. In terms of assembly, interacts (via SH3 domain) with PEX14 (via SH3-binding motif); forming the PEX13-PEX14 docking complex. Interacts with PEX19.

It localises to the peroxisome membrane. Functionally, component of the PEX13-PEX14 docking complex, a translocon channel that specifically mediates the import of peroxisomal cargo proteins bound to PEX5 receptor. The PEX13-PEX14 docking complex forms a large import pore which can be opened to a diameter of about 9 nm. Mechanistically, PEX5 receptor along with cargo proteins associates with the PEX14 subunit of the PEX13-PEX14 docking complex in the cytosol, leading to the insertion of the receptor into the organelle membrane with the concomitant translocation of the cargo into the peroxisome matrix. Involved in the import of PTS1- and PTS2-type containing proteins. The chain is Peroxisomal membrane protein PEX13 from Mus musculus (Mouse).